A 955-amino-acid polypeptide reads, in one-letter code: 2-oxoglutarate dehydrogenase E1 component (955 aa).

Belongs to the alpha-ketoglutarate dehydrogenase family. As to quaternary structure, homodimer. Part of the 2-oxoglutarate dehydrogenase (OGDH) complex composed of E1 (2-oxoglutarate dehydrogenase), E2 (dihydrolipoamide succinyltransferase) and E3 (dihydrolipoamide dehydrogenase); the complex contains multiple copies of the three enzymatic components (E1, E2 and E3). Requires thiamine diphosphate as cofactor.

The enzyme catalyses N(6)-[(R)-lipoyl]-L-lysyl-[protein] + 2-oxoglutarate + H(+) = N(6)-[(R)-S(8)-succinyldihydrolipoyl]-L-lysyl-[protein] + CO2. Its function is as follows. E1 component of the 2-oxoglutarate dehydrogenase (OGDH) complex which catalyzes the decarboxylation of 2-oxoglutarate, the first step in the conversion of 2-oxoglutarate to succinyl-CoA and CO(2). The sequence is that of 2-oxoglutarate dehydrogenase E1 component from Bacillus cereus (strain B4264).